Here is a 901-residue protein sequence, read N- to C-terminus: Translation initiation factor IF-2 (901 aa).

The segment at 48–313 (HLNREHGGSS…SSLQQGFTKP (266 aa)) is disordered. Polar residues predominate over residues 68–82 (STLSVPGTGGKSKSV). A compositionally biased stretch (basic and acidic residues) spans 106–226 (ALAKREAEEQ…RMAEANEGKW (121 aa)). Positions 263-277 (ARGRGGKAAKQKKGS) are enriched in basic residues. The span at 278-291 (KLSESKADREEARA) shows a compositional bias: basic and acidic residues. In terms of domain architecture, tr-type G spans 400–569 (PRAPVVTIMG…LLQAEVLELK (170 aa)). The G1 stretch occupies residues 409–416 (GHVDHGKT). 409-416 (GHVDHGKT) contributes to the GTP binding site. The tract at residues 434 to 438 (GITQH) is G2. The G3 stretch occupies residues 455-458 (DTPG). Residues 455 to 459 (DTPGH) and 509 to 512 (NKID) contribute to the GTP site. A G4 region spans residues 509–512 (NKID). Positions 545-547 (SAK) are G5.

The protein belongs to the TRAFAC class translation factor GTPase superfamily. Classic translation factor GTPase family. IF-2 subfamily.

The protein resides in the cytoplasm. Its function is as follows. One of the essential components for the initiation of protein synthesis. Protects formylmethionyl-tRNA from spontaneous hydrolysis and promotes its binding to the 30S ribosomal subunits. Also involved in the hydrolysis of GTP during the formation of the 70S ribosomal complex. The chain is Translation initiation factor IF-2 from Edwardsiella ictaluri (strain 93-146).